We begin with the raw amino-acid sequence, 157 residues long: Probable succinate transporter subunit YjjB (157 aa).

The next 4 membrane-spanning stretches (helical) occupy residues 8-28, 55-75, 87-107, and 129-149; these read LALM…AMVF, AGFN…SIGI, VFTV…TAMI, and FLKA…PGLW.

It belongs to the ThrE exporter (TC 2.A.79) family. As to quaternary structure, the transporter is composed of YjjB and YjjP.

The protein localises to the cell inner membrane. Its function is as follows. Involved in succinate export with YjjP. Both proteins are required for export. In Salmonella agona (strain SL483), this protein is Probable succinate transporter subunit YjjB.